A 200-amino-acid polypeptide reads, in one-letter code: NADH-ubiquinone oxidoreductase 21.3 kDa subunit (200 aa).

The next 3 membrane-spanning stretches (helical) occupy residues 16-36, 48-68, and 105-125; these read IKSG…MASL, MHVF…GGIY, and FPVI…FAFS.

As to quaternary structure, complex I is composed of about 40 different subunits.

Its subcellular location is the mitochondrion inner membrane. It catalyses the reaction a ubiquinone + NADH + 5 H(+)(in) = a ubiquinol + NAD(+) + 4 H(+)(out). Functionally, transfer of electrons from NADH to the respiratory chain. The immediate electron acceptor for the enzyme is believed to be ubiquinone. This is NADH-ubiquinone oxidoreductase 21.3 kDa subunit from Neurospora crassa (strain ATCC 24698 / 74-OR23-1A / CBS 708.71 / DSM 1257 / FGSC 987).